A 96-amino-acid polypeptide reads, in one-letter code: Large ribosomal subunit protein uL15 (96 aa).

The protein belongs to the universal ribosomal protein uL15 family. As to quaternary structure, part of the 50S ribosomal subunit.

Its function is as follows. Binds to the 23S rRNA. The protein is Large ribosomal subunit protein uL15 (rplO) of Streptomyces scabiei.